An 89-amino-acid chain; its full sequence is Mapacalcine (89 aa).

The residue at position 89 (Q89) is a Glutamine amide.

As to quaternary structure, homodimer. Contains disulfide bonds which may also be involved in dimerization.

Its function is as follows. Blocks calcium currents via interaction with a yet unknown target protein. Has no effect on L-type, T-type, N-type or P/Q-type voltage-gated calcium channels (VGCC). Has no effect on voltage-gated potassium or chloride channels. Blocks non-L-type VGCC calcium currents in mouse duodenal myocytes (IC(50)=0.2 uM). Blocks calcium influx induced by hypoxia/reoxygenation in rat hepatocytes. In Pione vastifica (Boring sponge), this protein is Mapacalcine.